The following is a 239-amino-acid chain: Endonuclease V (239 aa).

Residues D50 and D118 each coordinate Mg(2+).

It belongs to the endonuclease V family. Mg(2+) serves as cofactor.

The protein localises to the cytoplasm. It catalyses the reaction Endonucleolytic cleavage at apurinic or apyrimidinic sites to products with a 5'-phosphate.. Its function is as follows. DNA repair enzyme involved in the repair of deaminated bases. Selectively cleaves double-stranded DNA at the second phosphodiester bond 3' to a deoxyinosine leaving behind the intact lesion on the nicked DNA. This is Endonuclease V from Xylella fastidiosa (strain 9a5c).